Reading from the N-terminus, the 344-residue chain is Dihydroorotate dehydrogenase (quinone) (344 aa).

FMN is bound by residues 61–65 (AGLDK) and threonine 85. Lysine 65 is a binding site for substrate. A substrate-binding site is contributed by 110–114 (NRMGF). Residues asparagine 138 and asparagine 171 each coordinate FMN. Asparagine 171 contributes to the substrate binding site. The active-site Nucleophile is serine 174. Residue asparagine 176 participates in substrate binding. FMN contacts are provided by lysine 216 and threonine 244. Residue 245–246 (NT) coordinates substrate. FMN-binding positions include glycine 267, glycine 296, and 317-318 (YS).

The protein belongs to the dihydroorotate dehydrogenase family. Type 2 subfamily. As to quaternary structure, monomer. Requires FMN as cofactor.

The protein localises to the cell membrane. The enzyme catalyses (S)-dihydroorotate + a quinone = orotate + a quinol. The protein operates within pyrimidine metabolism; UMP biosynthesis via de novo pathway; orotate from (S)-dihydroorotate (quinone route): step 1/1. In terms of biological role, catalyzes the conversion of dihydroorotate to orotate with quinone as electron acceptor. The chain is Dihydroorotate dehydrogenase (quinone) from Psychrobacter sp. (strain PRwf-1).